The chain runs to 238 residues: Phosphoribosylaminoimidazole-succinocarboxamide synthase (238 aa).

Belongs to the SAICAR synthetase family.

The enzyme catalyses 5-amino-1-(5-phospho-D-ribosyl)imidazole-4-carboxylate + L-aspartate + ATP = (2S)-2-[5-amino-1-(5-phospho-beta-D-ribosyl)imidazole-4-carboxamido]succinate + ADP + phosphate + 2 H(+). The protein operates within purine metabolism; IMP biosynthesis via de novo pathway; 5-amino-1-(5-phospho-D-ribosyl)imidazole-4-carboxamide from 5-amino-1-(5-phospho-D-ribosyl)imidazole-4-carboxylate: step 1/2. This Marinomonas sp. (strain MWYL1) protein is Phosphoribosylaminoimidazole-succinocarboxamide synthase.